A 268-amino-acid polypeptide reads, in one-letter code: 3-methyl-2-oxobutanoate hydroxymethyltransferase (268 aa).

2 residues coordinate Mg(2+): Asp-46 and Asp-85. Residues 46 to 47 (DS), Asp-85, and Lys-115 contribute to the 3-methyl-2-oxobutanoate site. Glu-117 serves as a coordination point for Mg(2+). The active-site Proton acceptor is Glu-184.

Belongs to the PanB family. In terms of assembly, homodecamer; pentamer of dimers. It depends on Mg(2+) as a cofactor.

It localises to the cytoplasm. It catalyses the reaction 3-methyl-2-oxobutanoate + (6R)-5,10-methylene-5,6,7,8-tetrahydrofolate + H2O = 2-dehydropantoate + (6S)-5,6,7,8-tetrahydrofolate. It participates in cofactor biosynthesis; (R)-pantothenate biosynthesis; (R)-pantoate from 3-methyl-2-oxobutanoate: step 1/2. Functionally, catalyzes the reversible reaction in which hydroxymethyl group from 5,10-methylenetetrahydrofolate is transferred onto alpha-ketoisovalerate to form ketopantoate. The polypeptide is 3-methyl-2-oxobutanoate hydroxymethyltransferase (Magnetococcus marinus (strain ATCC BAA-1437 / JCM 17883 / MC-1)).